A 599-amino-acid polypeptide reads, in one-letter code: Probable acetolactate synthase large subunit (599 aa).

Position 47 (Glu-47) interacts with thiamine diphosphate. Residues Arg-149, 258 to 279, and 301 to 320 each bind FAD; these read HGTKPANYCLSESDVLISIGCR and DIDPAEIGKNVNVDVPIVGD. A thiamine pyrophosphate binding region spans residues 404–484; it reads QNQMWMAHYF…VVICIFDNRT (81 aa). Mg(2+) is bound by residues Asp-455 and Asn-482.

The protein belongs to the TPP enzyme family. Dimer of large and small chains. Mg(2+) is required as a cofactor. The cofactor is thiamine diphosphate.

The catalysed reaction is 2 pyruvate + H(+) = (2S)-2-acetolactate + CO2. Its pathway is amino-acid biosynthesis; L-isoleucine biosynthesis; L-isoleucine from 2-oxobutanoate: step 1/4. It functions in the pathway amino-acid biosynthesis; L-valine biosynthesis; L-valine from pyruvate: step 1/4. In Methanococcus aeolicus, this protein is Probable acetolactate synthase large subunit (ilvB).